A 900-amino-acid polypeptide reads, in one-letter code: Bifunctional uridylyltransferase/uridylyl-removing enzyme (900 aa).

Residues Met-1–Pro-342 are uridylyltransferase. Residues Leu-343–Ser-705 are uridylyl-removing. In terms of domain architecture, HD spans Val-461 to Leu-583. ACT domains are found at residues Gln-706 to Arg-789 and Val-816 to Arg-891.

The protein belongs to the GlnD family. It depends on Mg(2+) as a cofactor.

It catalyses the reaction [protein-PII]-L-tyrosine + UTP = [protein-PII]-uridylyl-L-tyrosine + diphosphate. The catalysed reaction is [protein-PII]-uridylyl-L-tyrosine + H2O = [protein-PII]-L-tyrosine + UMP + H(+). Uridylyltransferase (UTase) activity is inhibited by glutamine, while glutamine activates uridylyl-removing (UR) activity. Its function is as follows. Modifies, by uridylylation and deuridylylation, the PII regulatory proteins (GlnB and homologs), in response to the nitrogen status of the cell that GlnD senses through the glutamine level. Under low glutamine levels, catalyzes the conversion of the PII proteins and UTP to PII-UMP and PPi, while under higher glutamine levels, GlnD hydrolyzes PII-UMP to PII and UMP (deuridylylation). Thus, controls uridylylation state and activity of the PII proteins, and plays an important role in the regulation of nitrogen assimilation and metabolism. The polypeptide is Bifunctional uridylyltransferase/uridylyl-removing enzyme (Pseudomonas aeruginosa (strain UCBPP-PA14)).